Reading from the N-terminus, the 535-residue chain is Alpha-1,3-mannosyl-glycoprotein 4-beta-N-acetylglucosaminyltransferase A (535 aa).

The Cytoplasmic segment spans residues 1–4 (MRLR). A helical; Signal-anchor for type II membrane protein membrane pass occupies residues 5-27 (NGTVATALAFITSFLTLSWYTTW). Residues 28–63 (QNGKEKLIAYQREFLALKERLRIAEHRISQRSSELN) are a coiled coil. Residues 28–535 (QNGKEKLIAY…NEIHIKKATN (508 aa)) are Lumenal-facing. Residues Asn77 and Asn458 are each glycosylated (N-linked (GlcNAc...) asparagine). Residue Ser474 is modified to Phosphoserine.

It belongs to the glycosyltransferase 54 family. The cofactor is a divalent metal cation. In terms of processing, N-glycosylated.

It is found in the golgi apparatus membrane. The protein localises to the secreted. It carries out the reaction N(4)-{beta-D-GlcNAc-(1-&gt;2)-alpha-D-Man-(1-&gt;3)-[beta-D-GlcNAc-(1-&gt;2)-alpha-D-Man-(1-&gt;6)]-beta-D-Man-(1-&gt;4)-beta-D-GlcNAc-(1-&gt;4)-beta-D-GlcNAc}-L-asparaginyl-[protein] + UDP-N-acetyl-alpha-D-glucosamine = N(4)-{beta-D-GlcNAc-(1-&gt;2)-[beta-D-GlcNAc-(1-&gt;4)]-alpha-D-Man-(1-&gt;3)-[beta-D-GlcNAc-(1-&gt;2)-alpha-D-Man-(1-&gt;6)]-beta-D-Man-(1-&gt;4)-beta-D-GlcNAc-(1-&gt;4)-beta-D-GlcNAc}-L-asparaginyl-[protein] + UDP + H(+). It catalyses the reaction an N(4)-{beta-D-GlcNAc-(1-&gt;2)-alpha-D-Man-(1-&gt;3)-[alpha-D-Man-(1-&gt;6)]-beta-D-Man-(1-&gt;4)-beta-D-GlcNAc-(1-&gt;4)-beta-D-GlcNAc}-L-asparaginyl-[protein] + UDP-N-acetyl-alpha-D-glucosamine = an N(4)-{beta-D-GlcNAc-(1-&gt;2)-[beta-D-GlcNAc-(1-&gt;4)]-alpha-D-Man-(1-&gt;3)-[alpha-D-Man-(1-&gt;6)]-beta-D-Man-(1-&gt;4)-beta-D-GlcNAc-(1-&gt;4)-beta-D-GlcNAc}-L-asparaginyl-[protein] + UDP + H(+). The catalysed reaction is an N(4)-{beta-D-GlcNAc-(1-&gt;2)-alpha-D-Man-(1-&gt;3)-[beta-D-GlcNAc-(1-&gt;2)-[beta-D-GlcNAc-(1-&gt;6)]-alpha-D-Man-(1-&gt;6)]-beta-D-Man-(1-&gt;4)-beta-D-GlcNAc-(1-&gt;4)-beta-D-GlcNAc}-L-asparaginyl-[protein] + UDP-N-acetyl-alpha-D-glucosamine = an N(4)-{beta-D-GlcNAc-(1-&gt;2)-[beta-D-GlcNAc-(1-&gt;4)]-alpha-D-Man-(1-&gt;3)-[beta-D-GlcNAc-(1-&gt;2)-[beta-D-GlcNAc-(1-&gt;6)]-alpha-D-Man-(1-&gt;6)]-beta-D-Man-(1-&gt;4)-beta-D-GlcNAc-(1-&gt;4)-beta-D-GlcNAc}-L-asparaginyl-[protein] + UDP + H(+). The enzyme catalyses an N(4)-{beta-D-GlcNAc-(1-&gt;2)-alpha-D-Man-(1-&gt;3)-[beta-D-GlcNAc-(1-&gt;2)-alpha-D-Man-(1-&gt;6)]-beta-D-Man-(1-&gt;4)-beta-D-GlcNAc-(1-&gt;4)-[alpha-L-Fuc-(1-&gt;6)]-beta-D-GlcNAc}-L-asparaginyl-[protein] + UDP-N-acetyl-alpha-D-glucosamine = N(4)-{beta-D-GlcNAc-(1-&gt;2)-[beta-D-GlcNAc-(1-&gt;4)]-alpha-D-Man-(1-&gt;3)-[beta-D-GlcNAc-(1-&gt;2)-alpha-D-Man-(1-&gt;6)]-beta-D-Man-(1-&gt;4)-beta-D-GlcNAc-(1-&gt;4)-[alpha-L-Fuc-(1-&gt;6)]-beta-D-GlcNAc}-asparaginyl-[protein] + UDP + H(+). It carries out the reaction an N(4)-{beta-D-GlcNAc-(1-&gt;2)-alpha-D-Man-(1-&gt;3)-[beta-D-Gal-(1-&gt;4)-beta-D-GlcNAc-(1-&gt;2)-alpha-D-Man-(1-&gt;6)]-beta-D-Man-(1-&gt;4)-beta-D-GlcNAc-(1-&gt;4)-beta-D-GlcNAc}-L-asparaginyl-[protein] + UDP-N-acetyl-alpha-D-glucosamine = an N(4)-{beta-D-GlcNAc-(1-&gt;2)-[beta-D-GlcNAc-(1-&gt;4)]-alpha-D-Man-(1-&gt;3)-[beta-D-Gal-(1-&gt;4)-beta-D-GlcNAc-(1-&gt;2)-alpha-D-Man-(1-&gt;6)]-beta-D-Man-(1-&gt;4)-beta-D-GlcNAc-(1-&gt;4)-beta-D-GlcNAc}-L-asparaginyl-[protein] + UDP + H(+). It catalyses the reaction N(4)-{beta-D-GlcNAc-(1-&gt;2)-alpha-D-Man-(1-&gt;3)-[alpha-D-Man-(1-&gt;3)-{alpha-D-Man-(1-&gt;6)}-alpha-D-Man-(1-&gt;6)]-beta-D-Man-(1-&gt;4)-beta-D-GlcNAc-(1-&gt;4)-beta-D-GlcNAc}-asparaginyl-[protein] + UDP-N-acetyl-alpha-D-glucosamine = N(4)-{beta-D-GlcNAc-(1-&gt;2)-[beta-D-GlcNAc-(1-&gt;4)]-alpha-D-Man-(1-&gt;3)-[alpha-D-Man-(1-&gt;3)-{alpha-D-Man-(1-&gt;6)}-alpha-D-Man-(1-&gt;6)]-beta-D-Man-(1-&gt;4)-beta-D-GlcNAc-(1-&gt;4)-beta-D-GlcNAc}-asparaginyl-[protein] + UDP + H(+). The catalysed reaction is N(4)-{beta-D-GlcNAc-(1-&gt;2)-alpha-D-Man-(1-&gt;3)-beta-D-Man-(1-&gt;4)-beta-D-GlcNAc-(1-&gt;4)-beta-D-GlcNAc}-asparaginyl-[protein] + UDP-N-acetyl-alpha-D-glucosamine = N(4)-{beta-D-GlcNAc-(1-&gt;2)-[beta-D-GlcNAc-(1-&gt;4)]-alpha-D-Man-(1-&gt;3)-beta-D-Man-(1-&gt;4)-beta-D-GlcNAc-(1-&gt;4)-beta-D-GlcNAc}-asparaginyl-[protein] + UDP + H(+). It participates in protein modification; protein glycosylation. Its activity is regulated as follows. Inhibited by UDP. Its function is as follows. Glycosyltransferase that catalyze the transfer of GlcNAc from UDP-GlcNAc to the GlcNAcbeta1-2Manalpha1-3 arm of the core structure of N-linked glycans through a beta1-4 linkage and participates in the production of tri- and tetra-antennary N-linked sugar chains. Involved in glucose transport by mediating SLC2A2/GLUT2 glycosylation, thereby controlling cell-surface expression of SLC2A2 in pancreatic beta cells. This Pongo abelii (Sumatran orangutan) protein is Alpha-1,3-mannosyl-glycoprotein 4-beta-N-acetylglucosaminyltransferase A.